A 121-amino-acid polypeptide reads, in one-letter code: Putative iron-sulfur cluster insertion protein ErpA (121 aa).

The iron-sulfur cluster site is built by cysteine 49, cysteine 113, and cysteine 115.

This sequence belongs to the HesB/IscA family. Homodimer. It depends on iron-sulfur cluster as a cofactor.

Its function is as follows. Required for insertion of 4Fe-4S clusters. The protein is Putative iron-sulfur cluster insertion protein ErpA of Nitrosomonas europaea (strain ATCC 19718 / CIP 103999 / KCTC 2705 / NBRC 14298).